Reading from the N-terminus, the 306-residue chain is MKPTKQILEDILDEVRPLIGQGKVADYIPALACVPNDKLGIAVFTNDGEMLTAGDATECFSIQSISKALSLTLAMELYQPEELWQRVGKEPSGQAFNSLIQLEMEQGVPRNPFINAGAIVISDMLYSRFSAPKHRLLEFVRKLSGNDHIIYDRVVANSEMDHSDRNASIAYLMRSFGNFDNEVMPVLKNYFHACALSMNCVDLARTFGYLANKGIQPGISEPIVTPMQCKQINALMATCGLYDGAGEFAYRVGMPGKSGVGGGIIAIVPGEMTIAVWSPELDPSGNSLAGTKALELLSERIGRSIF.

7 residues coordinate substrate: S64, N115, E159, N166, Y190, Y242, and V260.

It belongs to the glutaminase family. In terms of assembly, homotetramer.

It catalyses the reaction L-glutamine + H2O = L-glutamate + NH4(+). In Aliivibrio fischeri (strain ATCC 700601 / ES114) (Vibrio fischeri), this protein is Glutaminase.